The chain runs to 600 residues: Probable pectin methyltransferase QUA3 (600 aa).

At 1–18 (MGHVNLPASKRGNPRQWR) the chain is on the cytoplasmic side. Residues 19-39 (LLDIVTAAFFGIVLLFFILLF) traverse the membrane as a helical; Signal-anchor for type II membrane protein segment. The Lumenal segment spans residues 40–600 (TPLGDSMAAS…SLWKLPSNSH (561 aa)). An N-linked (GlcNAc...) asparagine glycan is attached at Asn-283.

This sequence belongs to the methyltransferase superfamily. Highly expressed and abundant in suspension-cultured cells, but low levels in seedlings.

It localises to the golgi apparatus membrane. The protein operates within glycan metabolism; pectin biosynthesis. S-adenosyl-L-methionine (SAM)-dependent methyltransferase (MTase) which mediates the methylesterification of the pectin homogalacturonan (HG) and thus regulates cell wall biosynthesis, at least in suspension-cultured cells. This Arabidopsis thaliana (Mouse-ear cress) protein is Probable pectin methyltransferase QUA3.